The following is a 105-amino-acid chain: Pyrimidine/purine nucleoside phosphorylase (105 aa).

It belongs to the nucleoside phosphorylase PpnP family.

It carries out the reaction a purine D-ribonucleoside + phosphate = a purine nucleobase + alpha-D-ribose 1-phosphate. It catalyses the reaction adenosine + phosphate = alpha-D-ribose 1-phosphate + adenine. The catalysed reaction is cytidine + phosphate = cytosine + alpha-D-ribose 1-phosphate. The enzyme catalyses guanosine + phosphate = alpha-D-ribose 1-phosphate + guanine. It carries out the reaction inosine + phosphate = alpha-D-ribose 1-phosphate + hypoxanthine. It catalyses the reaction thymidine + phosphate = 2-deoxy-alpha-D-ribose 1-phosphate + thymine. The catalysed reaction is uridine + phosphate = alpha-D-ribose 1-phosphate + uracil. The enzyme catalyses xanthosine + phosphate = alpha-D-ribose 1-phosphate + xanthine. Its function is as follows. Catalyzes the phosphorolysis of diverse nucleosides, yielding D-ribose 1-phosphate and the respective free bases. Can use uridine, adenosine, guanosine, cytidine, thymidine, inosine and xanthosine as substrates. Also catalyzes the reverse reactions. The protein is Pyrimidine/purine nucleoside phosphorylase of Cupriavidus necator (strain ATCC 17699 / DSM 428 / KCTC 22496 / NCIMB 10442 / H16 / Stanier 337) (Ralstonia eutropha).